Reading from the N-terminus, the 365-residue chain is Histidinol-phosphate aminotransferase 2 (365 aa).

Lys-226 is subject to N6-(pyridoxal phosphate)lysine.

The protein belongs to the class-II pyridoxal-phosphate-dependent aminotransferase family. Histidinol-phosphate aminotransferase subfamily. In terms of assembly, homodimer. The cofactor is pyridoxal 5'-phosphate.

It carries out the reaction L-histidinol phosphate + 2-oxoglutarate = 3-(imidazol-4-yl)-2-oxopropyl phosphate + L-glutamate. Its pathway is amino-acid biosynthesis; L-histidine biosynthesis; L-histidine from 5-phospho-alpha-D-ribose 1-diphosphate: step 7/9. In Pasteurella multocida (strain Pm70), this protein is Histidinol-phosphate aminotransferase 2 (hisC2).